We begin with the raw amino-acid sequence, 381 residues long: Putative F-box/kelch-repeat protein At3g17570 (381 aa).

One can recognise an F-box domain in the interval 1–45 (MFTDLPRDLETEILSRVPATSLQKLKPTCKRWYTLFKDPEFLKKH). 3 Kelch repeats span residues 151-199 (SYKI…TLKG), 229-281 (LLYQ…KIVE), and 331-379 (RFYI…GGKR).

The polypeptide is Putative F-box/kelch-repeat protein At3g17570 (Arabidopsis thaliana (Mouse-ear cress)).